The sequence spans 379 residues: Sulfate adenylyltransferase (379 aa).

The protein belongs to the sulfate adenylyltransferase family.

The enzyme catalyses sulfate + ATP + H(+) = adenosine 5'-phosphosulfate + diphosphate. The protein operates within sulfur metabolism; hydrogen sulfide biosynthesis; sulfite from sulfate: step 1/3. This Thermococcus onnurineus (strain NA1) protein is Sulfate adenylyltransferase.